The chain runs to 1062 residues: MSAGTHCGPPGNRAPPFARLCCVSAALGMLWSPACLAFNLDVDKLTVYSGPEGSYFGYSLDFYIPDARTASVLVGAPKANTSQPDIVEGGAVYYCPWPSERSAQCKQIPFDTTNNRKIRVNGTKEPIEFKSNQWFGATVRAHKGKVVACAPLYHWRTLKPNPAKDPVGTCYVAIQNFSAYAEHSPCRNSNADPEGQGYCQAGFSLDFYKNGDLIVGGPGSFYWQGQVITVSIADIIANYSFKDILRKLAAEKQTDVAPASYDDSYLGYSVAAGEFTGDSQQELVAGIPRGAQNFGYVSIINSTDMTFIQNFTGEQMASYFGYTVVVSDVNNDGMDDILVGAPLFMEREFESNPREVGQVYLYLQASALLFQDPQVLTGTETFGRFGSSVAHLGDLNQDGYNDIAIGVPFAGKDQRGKVLIYNGNPRGLHSKPSQVLQGIWGSQTIPSGFGFSLRGDADIDKNDYPDLLVGAFGKGKVAVYRARPVVTVDAQLLLHPMIINLENKTCQIPEFPTPVACFSVRVCASIAGQSISNTIALLAEVQLDFLKQKGAIKRTLFLHNHQSHFTFPFVMKQQKSLHCQDFMVYLRDETEFRDKLSPINISLNYSLDDSTFKDSLEVKPILNHYRDNVVTEQAHILVDCGEDNLCVPDLKLSARPDKHQIIIGDENHLMLIINARNEGEGAYEAELFVIIPEEADYVGIERNNKGLRPLSCEYKMENVTRMVVCDLGNPMVTGTNFSLGLRFAVPRLEKTNMSINFDLQIRSSNKDNPDSNFERVQINITAIAQVEIRGVSHPPQIVLPIHNWEPEKKPHKEEEVGPLVEHIYELHNIGPSTISDSILDVGWPFSARDEFLLYIFHLQTLGPLQCQTNPEINPQDIKPAASPEDTPELSAFLRNATIPHLVRKRDVPVVQLHRQSPARILNCTNIDCLQISCAVGRLGGGESAVLKVRSRLWAHTFLKRKNDHYALASLVSFEVKKMPYKEQPAKLPAGSTAVKTSVIWATPNVSFSIPLWVIILAILLGLLVLAILTLALWKCGFFDRARPPQDEMTDREQLTSDKTPEA.

A signal peptide spans 1-35 (MSAGTHCGPPGNRAPPFARLCCVSAALGMLWSPAC). Residues 36 to 1010 (LAFNLDVDKL…ATPNVSFSIP (975 aa)) are Extracellular-facing. 7 FG-GAP repeats span residues 41 to 104 (DVDK…RSAQ), 121 to 182 (NGTK…AYAE), 187 to 239 (RNSN…IANY), 252 to 305 (KQTD…STDM), 306 to 371 (TFIQ…LLFQ), 372 to 430 (DPQV…GLHS), and 434 to 497 (QVLQ…LHPM). Asparagine 80 carries an N-linked (GlcNAc...) asparagine glycan. An intrachain disulfide couples cysteine 95 to cysteine 105. An N-linked (GlcNAc...) asparagine glycan is attached at asparagine 121. Cysteine 149 and cysteine 170 are disulfide-bonded. Asparagine 176 carries an N-linked (GlcNAc...) asparagine glycan. An intrachain disulfide couples cysteine 186 to cysteine 199. A glycan (N-linked (GlcNAc...) asparagine) is linked at asparagine 238. Glutamate 274, threonine 276, aspartate 278, and glutamate 282 together coordinate Ca(2+). Residues asparagine 301 and asparagine 310 are each glycosylated (N-linked (GlcNAc...) asparagine). Ca(2+)-binding residues include aspartate 328, asparagine 330, aspartate 332, aspartate 336, aspartate 394, asparagine 396, aspartate 398, tyrosine 400, and aspartate 402. Positions 454 to 456 (RGD) match the Cell attachment site motif. 5 residues coordinate Ca(2+): aspartate 458, aspartate 460, asparagine 462, tyrosine 464, and aspartate 466. Asparagine 503 is a glycosylation site (N-linked (GlcNAc...) asparagine). 2 disulfides stabilise this stretch: cysteine 506–cysteine 517 and cysteine 523–cysteine 579. N-linked (GlcNAc...) asparagine glycosylation is found at asparagine 600 and asparagine 604. Disulfide bonds link cysteine 640–cysteine 646 and cysteine 712–cysteine 725. Residues asparagine 718, asparagine 736, asparagine 752, asparagine 779, asparagine 895, and asparagine 922 are each glycosylated (N-linked (GlcNAc...) asparagine). 2 disulfide bridges follow: cysteine 866/cysteine 923 and cysteine 928/cysteine 933. The N-linked (GlcNAc...) asparagine glycan is linked to asparagine 1004. A helical transmembrane segment spans residues 1011-1031 (LWVIILAILLGLLVLAILTLA). Over 1032 to 1062 (LWKCGFFDRARPPQDEMTDREQLTSDKTPEA) the chain is Cytoplasmic.

It belongs to the integrin alpha chain family. In terms of assembly, heterodimer of an alpha and a beta subunit. The alpha subunit is composed of a heavy and a light chain linked by a disulfide bond. Alpha-8 associates with beta-1. As to expression, in brain, expressed in deep cortex, hippocampal CA1, basolateral amygdala and striatum. In kidney, expressed in glomerular mesengium (at protein level).

The protein localises to the membrane. Its subcellular location is the cell membrane. Functionally, integrin alpha-8/beta-1 functions in the genesis of kidney and probably of other organs by regulating the recruitment of mesenchymal cells into epithelial structures. It recognizes the sequence R-G-D in a wide array of ligands including TNC, FN1, SPP1 TGFB1, TGFB3 and VTN. NPNT is probably its functional ligand in kidney genesis. Neuronal receptor for TNC it mediates cell-cell interactions and regulates neurite outgrowth of sensory and motor neurons. The chain is Integrin alpha-8 (Itga8) from Mus musculus (Mouse).